The chain runs to 1299 residues: DNA-directed RNA polymerase subunit beta' (1299 aa).

4 residues coordinate Zn(2+): C60, C62, C75, and C78. D535, D537, and D539 together coordinate Mg(2+). Residues C877, C954, C961, and C964 each contribute to the Zn(2+) site.

It belongs to the RNA polymerase beta' chain family. In terms of assembly, the RNAP catalytic core consists of 2 alpha, 1 beta, 1 beta' and 1 omega subunit. When a sigma factor is associated with the core the holoenzyme is formed, which can initiate transcription. It depends on Mg(2+) as a cofactor. Zn(2+) serves as cofactor.

The enzyme catalyses RNA(n) + a ribonucleoside 5'-triphosphate = RNA(n+1) + diphosphate. Its function is as follows. DNA-dependent RNA polymerase catalyzes the transcription of DNA into RNA using the four ribonucleoside triphosphates as substrates. The polypeptide is DNA-directed RNA polymerase subunit beta' (Renibacterium salmoninarum (strain ATCC 33209 / DSM 20767 / JCM 11484 / NBRC 15589 / NCIMB 2235)).